The primary structure comprises 500 residues: Oogenesin-3 (500 aa).

The LRR 1; degenerate repeat unit spans residues 116–143 (RCKLRVLKWRDEQHDFCGIWPGSHEAED). One copy of the LRR 2; degenerate repeat lies at 198–222 (HLLCRKLVIETLTKDTVIEIFKIVN). Residues 223–248 (ADCIQELELYSLCLEDLAFLNPYLRQ) form an LRR 3; degenerate repeat. The stretch at 249-285 (MDNLLELTLDHVTDSLSMGDSEMCEEEMITLVSQLPT) is one LRR 4; degenerate repeat. LRR repeat units lie at residues 286–311 (FPCL…LRCL), 312–343 (KKPL…FELK), 344–367 (CLYL…LESV), 368–395 (RHTL…ALSQ), and 396–420 (CSHL…LLQH).

It belongs to the PRAME family. As to expression, expressed in ovary, specifically in oocytes. Detected in follicles with two layers of granulosa cells, and are present in early as well as large antral follicles.

This Mus musculus (Mouse) protein is Oogenesin-3.